The sequence spans 545 residues: Autoimmune regulator (545 aa).

The HSR domain occupies 1–105 (MATDAALRRL…ILDSFPKDVD (105 aa)). Short sequence motifs (LXXLL motif) lie at residues 7–11 (LRRLL) and 63–67 (LSWLL). 2 disordered regions span residues 101-178 (PKDV…LPLG) and 234-290 (SKFE…SDPQ). Positions 116–128 (PAVPKALVPPPRL) are enriched in pro residues. Low complexity predominate over residues 140-152 (AAAPAALTPRGTA). The region spanning 181 to 280 (IQTMSASVQR…ARLGQQGSVP (100 aa)) is the SAND domain. 3 interaction with histone H3 not methylated at 'Lys-4' regions span residues 295–298 (NEDE), 304–312 (DGGELICCD), and 331–335 (PSGTW). The PHD-type 1 zinc finger occupies 296–343 (EDECAVCRDGGELICCDGCPRAFHLACLSPPLREIPSGTWRCSSCLQA). Residues 348–382 (VQPRAEEPRPQEPPVETPLPPGLRSAGEEVRGPPG) form a disordered region. Residues 358–368 (QEPPVETPLPP) are compositionally biased toward pro residues. Positions 414 to 418 (LHPLL) match the LXXLL motif 3 motif. The segment at 434–475 (CGVCGDGTDVLRCTHCAAAFHWRCHFPAGTSRPGTGLRCRSC) adopts a PHD-type 2 zinc-finger fold. The segment at 489–508 (APSPARLAPGPAKDDTASHE) is disordered. An LXXLL motif 4 motif is present at residues 516–520 (LESLL).

In terms of assembly, homodimer and homotetramer. Interacts with CREBBP. Interacts preferentially with histone H3 that is not methylated at 'Lys-4'. Binds with lower affinity to histone H3 that is monomethylated at 'Lys-4'. Trimethylation of histone H3 at 'Lys-4' or phosphorylation at 'Thr-3' abolish the interaction. Binds with lower affinity to histone H3 that is acetylated at 'Lys-4', or that is acetylated at 'Lys-9' or trimethylated at 'Lys-9'. Binds histone H3 that is dimethylated at 'Arg-2' with very low affinity. Phosphorylated. Phosphorylation could trigger oligomerization. As to expression, widely expressed. Expressed at higher level in thymus (medullary epithelial cells and monocyte-dendritic cells), pancreas, adrenal cortex and testis. Expressed at lower level in the spleen, fetal liver and lymph nodes. In secondary lymphoid organs, expressed in a discrete population of bone marrow-derived toleregenic antigen presenting cells (APCs) called extrathymic AIRE expressing cells (eTAC)(at protein level). Isoform 2 and isoform 3 seem to be less frequently expressed than isoform 1, if at all.

The protein localises to the nucleus. It is found in the cytoplasm. Functionally, transcription factor playing an essential role to promote self-tolerance in the thymus by regulating the expression of a wide array of self-antigens that have the commonality of being tissue-restricted in their expression pattern in the periphery, called tissue restricted antigens (TRA). Binds to G-doublets in an A/T-rich environment; the preferred motif is a tandem repeat of 5'-ATTGGTTA-3' combined with a 5'-TTATTA-3' box. Binds to nucleosomes. Binds to chromatin and interacts selectively with histone H3 that is not methylated at 'Lys-4', not phosphorylated at 'Thr-3' and not methylated at 'Arg-2'. Functions as a sensor of histone H3 modifications that are important for the epigenetic regulation of gene expression. Mainly expressed by medullary thymic epithelial cells (mTECs), induces the expression of thousands of tissue-restricted proteins, which are presented on major histocompatibility complex class I (MHC-I) and MHC-II molecules to developing T-cells percolating through the thymic medulla. Also induces self-tolerance through other mechanisms such as the regulation of the mTEC differentiation program. Controls the medullary accumulation of thymic dendritic cells and the development of regulatory T-cell through the regulation of XCL1 expression. Regulates the production of CCR4 and CCR7 ligands in medullary thymic epithelial cells and alters the coordinated maturation and migration of thymocytes. In thimic B-cells, allows the presentation of licensing-dependent endogenous self-anitgen for negative selection. In secondary lymphoid organs, induces functional inactivation of CD4(+) T-cells. Expressed by a distinct bone marrow-derived population, induces self-tolerance through a mechanism that does not require regulatory T-cells and is resitant to innate inflammatory stimuli. In Homo sapiens (Human), this protein is Autoimmune regulator (AIRE).